A 945-amino-acid chain; its full sequence is MYGLVIEGVRFMIQENWGPQVLLQVQKLTSLSEKSVSTHDQYSEHVVPQMFKAIHEITGTPYEQIGVLAGRFFVQFLIRNGYGDLMNVMGRRFSDFIKGLDNIHEYFRFSYPKLRAPSFYCKSESEDGLILHYRSRRTGYLSYVIGQLVELARVFYQLDIGIQVLKKKEKGRFTFVVLKISFDNVGLGQDLKLKERVKNLNEYLPVDTKSFLQMFPFHIAFNKKLEILMAGQGLLNLMPNIQGLLMTDVFDLQRPCIKFTAEGIMVHQNCVFQIESLHPVVKQTEENITVQINDITEDKVSLEKKTVMDNEYESLPYVTLRGPITVLKSSETFLLLATCVVDTLDTMFKMGLYLNDFGESDCNREIIMATIQKSDTLKTMLENEKRRSEVLTEMTREISEAKKTARTLLTQMMPYEVAQTMMRSGSVDHCEAFECVSIGFIRVCDFSKISLFIEAFEVVNLLNTIYSHLDSIVDTHGVYKVETIGESYMISAGCPYRDDYDAEMVSDCCLEMVSHIKSFEYQSHDAVKKVLIKCGIFTGPVVGGVVGVRTPRYCLFGDTVNTASRMESSNQTPMTIQIGQRTKDRVEKQASGAFRIKPKGNVFVKGKGDMRVYEIEKKKGRARYKKSDPLRKKMVAEKKEAEELLDEDNEGHRSSALSRMSLGESIDSSSSRRGSLSGSQLELNKTIAQTIELTSKASAALDLNMQDENNRPPTWSASHSQDIRKPRKTESKITLNSRLSSSDLAVSRVETSKDSDGETPRPTSSELKEVNRIREEALAQEKEEERTTKEENQKIEEVGEDHVSEATSLLDSEVSHGDNNISFSQMPSDSIPHEDRTSLPSATPSEIGDAISKKKLEKEDSNSSMSSLDERTTVSAKPTTTRRLLNQKDLEKEKKRSSMAGSSVTSSSAHSHSIRSKKDTRDKSRCKCEDIRADNKLKTKVCSIM.

Position 104 (His104) interacts with heme. Residues 388 to 413 are a coiled coil; that stretch reads SEVLTEMTREISEAKKTARTLLTQMM. Positions 437–567 constitute a Guanylate cyclase domain; the sequence is SIGFIRVCDF…DTVNTASRME (131 aa). 2 disordered regions span residues 639–679 and 706–930; these read KEAE…LSGS and QDEN…KCED. The segment covering 661 to 679 has biased composition (low complexity); sequence SLGESIDSSSSRRGSLSGS. Residues 711–720 are compositionally biased toward polar residues; the sequence is RPPTWSASHS. Basic and acidic residues predominate over residues 721–731; sequence QDIRKPRKTES. A compositionally biased stretch (polar residues) spans 732–744; that stretch reads KITLNSRLSSSDL. Basic and acidic residues-rich tracts occupy residues 750-759 and 766-804; these read ETSKDSDGET and ELKE…DHVS. The stretch at 763–802 forms a coiled coil; that stretch reads TSSELKEVNRIREEALAQEKEEERTTKEENQKIEEVGEDH. Positions 817–828 are enriched in polar residues; sequence GDNNISFSQMPS. Basic and acidic residues predominate over residues 851–861; it reads ISKKKLEKEDS. Residues 862–884 show a composition bias toward polar residues; that stretch reads NSSMSSLDERTTVSAKPTTTRRL. Positions 886–896 are enriched in basic and acidic residues; sequence NQKDLEKEKKR. Residues 898-911 are compositionally biased toward low complexity; it reads SMAGSSVTSSSAHS. Positions 916–930 are enriched in basic and acidic residues; the sequence is SKKDTRDKSRCKCED.

The protein belongs to the adenylyl cyclase class-4/guanylyl cyclase family. As to quaternary structure, heterodimer; with other soluble guanylate cyclases. The cofactor is heme. In terms of tissue distribution, expressed in BAG sensory neuron.

The protein resides in the cytoplasm. It carries out the reaction GTP = 3',5'-cyclic GMP + diphosphate. Its activity is regulated as follows. May be regulated by molecular oxygen. Probably not activated by nitric oxide (NO). Synthesizes cyclic GMP (cGMP) from GTP. May be involved in sensitivity to quinine by regulating egl-4 activity through the production of cGMP. The polypeptide is Soluble guanylate cyclase gcy-33 (gcy-33) (Caenorhabditis elegans).